A 319-amino-acid chain; its full sequence is Structure-specific endonuclease subunit SLX1 (319 aa).

Residues 20–103 (TFYCCYLLQS…QHGYKTHYIP (84 aa)) form the GIY-YIG domain. The segment at 233–297 (CNLCGQCYDY…LPNFCMCPGC (65 aa)) adopts an SLX1-type zinc-finger fold.

Belongs to the SLX1 family. As to quaternary structure, forms a heterodimer with SLX4. Requires a divalent metal cation as cofactor.

It is found in the nucleus. In terms of biological role, catalytic subunit of the SLX1-SLX4 structure-specific endonuclease that resolves DNA secondary structures generated during DNA repair and recombination. Has endonuclease activity towards branched DNA substrates, introducing single-strand cuts in duplex DNA close to junctions with ss-DNA. This chain is Structure-specific endonuclease subunit SLX1, found in Vanderwaltozyma polyspora (strain ATCC 22028 / DSM 70294 / BCRC 21397 / CBS 2163 / NBRC 10782 / NRRL Y-8283 / UCD 57-17) (Kluyveromyces polysporus).